We begin with the raw amino-acid sequence, 375 residues long: Chaperone protein DnaJ (375 aa).

Positions 5–70 (DYYDVLGVNR…QKRGAYDQFG (66 aa)) constitute a J domain. Residues 135 to 213 (GCEKQIRIPS…CHGAGQKKTT (79 aa)) form a CR-type zinc finger. Cys148, Cys151, Cys165, Cys168, Cys187, Cys190, Cys201, and Cys204 together coordinate Zn(2+). CXXCXGXG motif repeat units lie at residues 148–155 (CSTCNGTG), 165–172 (CATCGGHG), 187–194 (CPTCHGTG), and 201–208 (CGSCHGAG).

This sequence belongs to the DnaJ family. In terms of assembly, homodimer. The cofactor is Zn(2+).

The protein resides in the cytoplasm. Participates actively in the response to hyperosmotic and heat shock by preventing the aggregation of stress-denatured proteins and by disaggregating proteins, also in an autonomous, DnaK-independent fashion. Unfolded proteins bind initially to DnaJ; upon interaction with the DnaJ-bound protein, DnaK hydrolyzes its bound ATP, resulting in the formation of a stable complex. GrpE releases ADP from DnaK; ATP binding to DnaK triggers the release of the substrate protein, thus completing the reaction cycle. Several rounds of ATP-dependent interactions between DnaJ, DnaK and GrpE are required for fully efficient folding. Also involved, together with DnaK and GrpE, in the DNA replication of plasmids through activation of initiation proteins. The chain is Chaperone protein DnaJ from Chromobacterium violaceum (strain ATCC 12472 / DSM 30191 / JCM 1249 / CCUG 213 / NBRC 12614 / NCIMB 9131 / NCTC 9757 / MK).